A 222-amino-acid polypeptide reads, in one-letter code: uncharacterized protein (222 aa).

The tat-type signal signal peptide spans 1 to 27 (MSFTRRKFVLGMGTVIFFTGSASSLLA). 3 consecutive 4Fe-4S ferredoxin-type domains span residues 37–67 (YAMI…AQGS), 83–114 (TQYH…RDEQ), and 115–144 (GIVR…LNPV). Residues cysteine 46, cysteine 49, cysteine 52, cysteine 56, cysteine 92, cysteine 95, cysteine 100, cysteine 104, cysteine 124, cysteine 127, cysteine 130, cysteine 134, cysteine 151, cysteine 154, cysteine 167, and cysteine 171 each coordinate [4Fe-4S] cluster.

Post-translationally, exported by the Tat system. The position of the signal peptide cleavage has not been experimentally proven. Can also be exported by the Sec system.

This is an uncharacterized protein from Escherichia coli (strain K12).